Consider the following 467-residue polypeptide: Light-independent protochlorophyllide reductase subunit N (467 aa).

Positions 24, 49, and 109 each coordinate [4Fe-4S] cluster.

It belongs to the BchN/ChlN family. As to quaternary structure, protochlorophyllide reductase is composed of three subunits; ChlL, ChlN and ChlB. Forms a heterotetramer of two ChlB and two ChlN subunits. Requires [4Fe-4S] cluster as cofactor.

The catalysed reaction is chlorophyllide a + oxidized 2[4Fe-4S]-[ferredoxin] + 2 ADP + 2 phosphate = protochlorophyllide a + reduced 2[4Fe-4S]-[ferredoxin] + 2 ATP + 2 H2O. It functions in the pathway porphyrin-containing compound metabolism; chlorophyll biosynthesis (light-independent). Functionally, component of the dark-operative protochlorophyllide reductase (DPOR) that uses Mg-ATP and reduced ferredoxin to reduce ring D of protochlorophyllide (Pchlide) to form chlorophyllide a (Chlide). This reaction is light-independent. The NB-protein (ChlN-ChlB) is the catalytic component of the complex. The sequence is that of Light-independent protochlorophyllide reductase subunit N from Leptolyngbya boryana (Plectonema boryanum).